Consider the following 244-residue polypeptide: MSDSSDTTVDGASDGASDGASGADNRAQLVDTALTERQRTILNVIRTSVNDRGYPPSIREIGDAVGLTSTSSVAHQLRTLERKGYLRRDPNRPRAVDVRGADDTVTAAPVTDVAGSDALPEPTFVPVLGRIAAGGPILAEEAVEDVFPLPRELVGQGTLFLLKVVGESMVEAAICDGDWVVVRQQNVADNGDIVAAMIDGEATVKTFKRAGGQIWLMPHNPAFDPIPGNDATVLGKVVTVIRKI.

Residues Met1–Asp24 form a disordered region. Residues Asp10–Asp24 are compositionally biased toward low complexity. Positions Ile58 to Arg78 form a DNA-binding region, H-T-H motif. Residues Ser168 and Lys205 each act as for autocatalytic cleavage activity in the active site.

This sequence belongs to the peptidase S24 family. In terms of assembly, homodimer.

The catalysed reaction is Hydrolysis of Ala-|-Gly bond in repressor LexA.. In terms of biological role, represses a number of genes involved in the response to DNA damage (SOS response), including recA and lexA. In the presence of single-stranded DNA, RecA interacts with LexA causing an autocatalytic cleavage which disrupts the DNA-binding part of LexA, leading to derepression of the SOS regulon and eventually DNA repair. This is LexA repressor from Mycobacterium ulcerans (strain Agy99).